We begin with the raw amino-acid sequence, 247 residues long: DNA polymerase sliding clamp (247 aa).

The protein belongs to the PCNA family. Homotrimer. The subunits circularize to form a toroid; DNA passes through its center. Replication factor C (RFC) is required to load the toroid on the DNA.

Sliding clamp subunit that acts as a moving platform for DNA processing. Responsible for tethering the catalytic subunit of DNA polymerase and other proteins to DNA during high-speed replication. This is DNA polymerase sliding clamp from Methanosphaerula palustris (strain ATCC BAA-1556 / DSM 19958 / E1-9c).